Here is a 37-residue protein sequence, read N- to C-terminus: Large ribosomal subunit protein bL36c (37 aa).

Belongs to the bacterial ribosomal protein bL36 family.

The protein localises to the plastid. It localises to the chloroplast. The polypeptide is Large ribosomal subunit protein bL36c (Pleurastrum terricola (Filamentous green alga)).